A 168-amino-acid polypeptide reads, in one-letter code: Protein yop-1 (168 aa).

At Met1 to Pro35 the chain is on the cytoplasmic side. The helical transmembrane segment at Lys36–Leu55 threads the bilayer. Gly56 is a topological domain (lumenal). A helical membrane pass occupies residues Gly57 to Ala76. Topologically, residues Leu77–Thr86 are cytoplasmic. A helical membrane pass occupies residues Gln87–Ser103. At Leu104–Ile105 the chain is on the lumenal side. Residues Ser106–Trp124 form a helical membrane-spanning segment. Residues Leu125–Asp168 lie on the Cytoplasmic side of the membrane.

Belongs to the DP1 family. As to quaternary structure, oligomer.

The protein resides in the endoplasmic reticulum membrane. The protein localises to the golgi apparatus membrane. Required to generate and maintain the structure of the tubular endoplasmic reticulum network and the vacuole. Induces high curvature in membranes and causes membrane tubule formation. Involved in membrane/vesicle trafficking. In Neurospora crassa (strain ATCC 24698 / 74-OR23-1A / CBS 708.71 / DSM 1257 / FGSC 987), this protein is Protein yop-1 (yop-1).